Here is a 609-residue protein sequence, read N- to C-terminus: Hemagglutinin glycoprotein (609 aa).

Residues 1–34 are Intravirion-facing; the sequence is MSPPRDRVDAYYKDNFQFKNTRVVLNKEQLLIER. A helical; Signal-anchor for type II membrane protein transmembrane segment spans residues 35–58; it reads PCMLLTVLFVMFLSLVGLLAIAGI. Residues 59–609 are Virion surface-facing; that stretch reads RLHRAAVNTA…VGIKITCNGK (551 aa). Residues N168, N187, N200, N215, and N395 are each glycosylated (N-linked (GlcNAc...) asparagine; by host).

The protein belongs to the paramyxoviruses hemagglutinin-neuraminidase family. Non-sialidase subfamily.

It is found in the virion membrane. It localises to the host membrane. Attaches the virus to cell receptors and thereby initiating infection. Binding of H protein to the receptor induces a conformational change that allows the F protein to trigger virion/cell membranes fusion. Down-regulates human MCP/CD46 cell surface expression. The chain is Hemagglutinin glycoprotein (H) from Rinderpest virus (strain Kabete O) (RDV).